A 636-amino-acid chain; its full sequence is Threonine--tRNA ligase (636 aa).

Residues 1–61 (MPVITLPDGS…TQDVSLSIIT (61 aa)) enclose the TGS domain. Residues 242–533 (DHRKLGKKFD…LIEEYEGAFP (292 aa)) form a catalytic region. The Zn(2+) site is built by Cys333, His384, and His510.

Belongs to the class-II aminoacyl-tRNA synthetase family. In terms of assembly, homodimer. The cofactor is Zn(2+).

Its subcellular location is the cytoplasm. The catalysed reaction is tRNA(Thr) + L-threonine + ATP = L-threonyl-tRNA(Thr) + AMP + diphosphate + H(+). Functionally, catalyzes the attachment of threonine to tRNA(Thr) in a two-step reaction: L-threonine is first activated by ATP to form Thr-AMP and then transferred to the acceptor end of tRNA(Thr). Also edits incorrectly charged L-seryl-tRNA(Thr). This is Threonine--tRNA ligase from Saccharophagus degradans (strain 2-40 / ATCC 43961 / DSM 17024).